Here is a 41-residue protein sequence, read N- to C-terminus: Alpha-conotoxin TxIB (41 aa).

Positions 1 to 20 are excised as a propeptide; sequence FDGRNTSANNKATDLMALPV. Intrachain disulfides connect Cys-23-Cys-29 and Cys-24-Cys-37. Positions 25–27 are ser-Xaa-Pro motif, crucial for potent interaction with nAChR; sequence SDP. Cysteine amide; in Alpha-conotoxin TxIB is present on Cys-37. A propeptide spanning residues 39-41 is cleaved from the precursor; that stretch reads GRR.

The protein belongs to the conotoxin A superfamily. As to expression, expressed by the venom duct.

Its subcellular location is the secreted. In terms of biological role, alpha-conotoxins act on postsynaptic membranes, they bind to the nicotinic acetylcholine receptors (nAChR) and thus inhibit them. This conotoxin is a subtype-specific blocker of alpha-6/alpha-3-beta-2-beta-3 (CHRNA6/CHRNA3-CHRNB2-CHRNB3) nAChRs nicotinic acetylcholine receptors (nAChRs) (IC(50)=28.4 nM). This Conus textile (Cloth-of-gold cone) protein is Alpha-conotoxin TxIB.